We begin with the raw amino-acid sequence, 105 residues long: Met repressor (105 aa).

It belongs to the MetJ family. In terms of assembly, homodimer.

The protein localises to the cytoplasm. Its function is as follows. This regulatory protein, when combined with SAM (S-adenosylmethionine) represses the expression of the methionine regulon and of enzymes involved in SAM synthesis. The polypeptide is Met repressor (Salmonella dublin (strain CT_02021853)).